We begin with the raw amino-acid sequence, 235 residues long: Claudin-16 (235 aa).

The Cytoplasmic portion of the chain corresponds to 1 to 3 (MRD). A helical membrane pass occupies residues 4–24 (LLQYIACFFAFFSAGFLIVAT). Over 25 to 79 (WTDCWMVNADDSLEVSTKCRGLWWECVTNAFDGIRTCDEYDSILAEHPLKLVVTR) the chain is Extracellular. A helical transmembrane segment spans residues 80–100 (ALMITADILAGFGFLTLLLGL). Topologically, residues 101-115 (DCVKFLPDEPYIKVR) are cytoplasmic. The chain crosses the membrane as a helical span at residues 116–136 (ICFVAGATLLIAGTPGIIGSV). Residues 137 to 169 (WYAVDVYVERSTLVLHNIFLGIQYKFGWSCWLG) are Extracellular-facing. A helical membrane pass occupies residues 170 to 190 (MAGSLGCFLAGAVLTCCLYLF). Residues 191–235 (KDVGPERNYPYSLRKAYSAAGVSMAKSYSAPRTETAKMYAVDTRV) are Cytoplasmic-facing. Positions 233–235 (TRV) match the Interaction with TJP1 motif.

This sequence belongs to the claudin family. Can form heteropolymeric tight junction strands with other claudins. Interacts with CLDN19. Interacts (via PDZ-binding motif TRV) with TJP1 (via PDZ domain). Cannot form tight junction strands on its own. In terms of tissue distribution, kidney-specific, including the thick ascending limb of Henle (TAL).

It is found in the cell junction. It localises to the tight junction. Its subcellular location is the cell membrane. It catalyses the reaction Mg(2+)(in) = Mg(2+)(out). The enzyme catalyses Ca(2+)(in) = Ca(2+)(out). It carries out the reaction Na(+)(in) = Na(+)(out). The catalysed reaction is K(+)(in) = K(+)(out). It catalyses the reaction Rb(+)(in) = Rb(+)(out). The enzyme catalyses Cs(+)(in) = Cs(+)(out). It carries out the reaction Li(+)(in) = Li(+)(out). In terms of biological role, forms paracellular channels: coassembles with CLDN19 into tight junction strands with cation-selective channels through the strands, conveying epithelial permeability in a process known as paracellular tight junction permeability. Involved in the maintenance of ion gradients along the nephron. In the thick ascending limb (TAL) of Henle's loop, facilitates sodium paracellular permeability from the interstitial compartment to the lumen, contributing to the lumen-positive transepithelial potential that drives paracellular magnesium and calcium reabsorption. The chain is Claudin-16 from Homo sapiens (Human).